Reading from the N-terminus, the 386-residue chain is Succinate--CoA ligase [ADP-forming] subunit beta (386 aa).

The ATP-grasp domain occupies 9-244; the sequence is KEILRKYGVP…HDEEDPLETR (236 aa). Residues Lys-46, 53 to 55, Glu-99, Cys-102, and Glu-107 each bind ATP; that span reads GRG. Mg(2+) contacts are provided by Asn-199 and Asp-213. Substrate is bound by residues Asn-264 and 321 to 323; that span reads GIM.

This sequence belongs to the succinate/malate CoA ligase beta subunit family. As to quaternary structure, heterotetramer of two alpha and two beta subunits. Requires Mg(2+) as cofactor.

It carries out the reaction succinate + ATP + CoA = succinyl-CoA + ADP + phosphate. It catalyses the reaction GTP + succinate + CoA = succinyl-CoA + GDP + phosphate. The protein operates within carbohydrate metabolism; tricarboxylic acid cycle; succinate from succinyl-CoA (ligase route): step 1/1. Functionally, succinyl-CoA synthetase functions in the citric acid cycle (TCA), coupling the hydrolysis of succinyl-CoA to the synthesis of either ATP or GTP and thus represents the only step of substrate-level phosphorylation in the TCA. The beta subunit provides nucleotide specificity of the enzyme and binds the substrate succinate, while the binding sites for coenzyme A and phosphate are found in the alpha subunit. The polypeptide is Succinate--CoA ligase [ADP-forming] subunit beta (Rickettsia conorii (strain ATCC VR-613 / Malish 7)).